We begin with the raw amino-acid sequence, 455 residues long: GTPase Der (455 aa).

EngA-type G domains are found at residues 4–169 (PVVA…PPKD) and 178–353 (IQMS…EQHR). Residues 10 to 17 (GRPNVGKS), 57 to 61 (DTGGL), 120 to 123 (NKCE), 184 to 191 (GRPNVGKS), 231 to 235 (DTAGI), and 296 to 299 (NKWD) contribute to the GTP site. Residues 354-439 (RRVTTSVVNE…PLKLFWRGKQ (86 aa)) form the KH-like domain.

This sequence belongs to the TRAFAC class TrmE-Era-EngA-EngB-Septin-like GTPase superfamily. EngA (Der) GTPase family. As to quaternary structure, associates with the 50S ribosomal subunit.

Functionally, GTPase that plays an essential role in the late steps of ribosome biogenesis. In Synechococcus sp. (strain CC9902), this protein is GTPase Der.